Consider the following 69-residue polypeptide: UPF0337 protein XAC4007 (69 aa).

This sequence belongs to the UPF0337 (CsbD) family.

The protein is UPF0337 protein XAC4007 of Xanthomonas axonopodis pv. citri (strain 306).